The sequence spans 1187 residues: MAAVSSGAAAAAGIPNPNPNRERPQQQQQQQPASAALHPVAHRSAAAACRPPLARVGYYEMERTIGKGNFAVVKLATHMITKAKVAIKIVDKTQLDDENLKKIFREVQIMKMLRHPHIIRLYQVMETERMIYLVTEYASGGEIFDHLVAHGRMAEKDARRKFKQIVAAVYFCHCRSIVHRDLKAENLLLDHNLNIKIADFGFSNLFSRGQLLKTWCGSPPYAAPELFEGKEYDGPKVDIWSLGVVLYVLVCGALPFDGSTLQNLRARVLSGKFRIPFFMSTDCEYLIRHMLILEPSRRLSMEQICKNKWMRQGDPDPEFDRLIVECEQVKVERETELINEQVLMAMAEMGFDRERTLQSLHADSYDHYSATYSLLSDKLKRHKNLCVAPPTPRPLYPLQDQSNAVSMTVPQVQLINPENQIVETDGPMALDSDEGEEPSPEAMARYLSMRRHTVGVPDPRAEMQEDLQKLAPGFPRVAPQAPFPPLMPALAQMQLMPTPSLQPGQQLEYKEQSLLQPPTLQLLNGMGPLGRRASDGGANIQLHTQQLLKRPRGQSPLVTSPHPIPAVAPVDEEGSDAEPDPEAVQRSSYKDCNTLHLPMERFSPVRRFSDGAATIQAYKTQLENNSLIRQLKQECEQLQKMYAAPQDERLMEHTQQQHVLYQQEQQILHQQIQALSLGHGENQPSSHLTYQLQRLRIQPSSPPPTHPSNHLFRPANQSSPPPPGGGAGLMQTHGGPSAVQYQHGSALYQSPSDSPPPTSLPRMALANQQPSVPPGSARTLAQTLPQQQVTIQVQEVELGGGAQRQSFLATPCHRVLGKQLSADNAETHSRSLSRFHTSAYEQLTAQLLGESVMGSYNPYLQGASLKVPGLEGYGLSYGGPSALQQALLSPTPLEYRPPPQVTPTLQGLLSPRHSLTGHADPRLPPQELAALLKRHSRPAPPTAPPTIPQDYGEMLLLQQLGQAAESLDSAPPQATPTQHYHHLLQIRTPPECPAPSLPHSESMEEDEMPAYHEGLLAKAAAPCTEAHELLAPPLGSTPPYSSPTHRHAYLRSATATRESCADAADAGMESDHNGYGSRSTQSDSYRPRGALQRHHTIQTCDDAYEQVEPMSGMSLLAGKALSSARMSDILSQSSLTGSQQLQQREGPVCDVDADVHSSSCYPSSCTTDMLLSYKTPDLQYSVEQAGV.

Over residues 1 to 15 (MAAVSSGAAAAAGIP) the composition is skewed to low complexity. Positions 1–41 (MAAVSSGAAAAAGIPNPNPNRERPQQQQQQQPASAALHPVA) are disordered. In terms of domain architecture, Protein kinase spans 59–310 (YEMERTIGKG…MEQICKNKWM (252 aa)). ATP is bound by residues 65 to 73 (IGKGNFAVV) and K88. D181 serves as the catalytic Proton acceptor. The residue at position 214 (T214) is a Phosphothreonine. Residue S218 is modified to Phosphoserine. In terms of domain architecture, UBA spans 337–377 (LINEQVLMAMAEMGFDRERTLQSLHADSYDHYSATYSLLSD). 3 disordered regions span residues 548–587 (LKRPRGQSPLVTSPHPIPAVAPVDEEGSDAEPDPEAVQRS), 697–776 (IQPS…PPGS), and 1060–1092 (CADAADAGMESDHNGYGSRSTQSDSYRPRGALQ). The span at 570 to 581 (VDEEGSDAEPDP) shows a compositional bias: acidic residues. Residues 739-749 (VQYQHGSALYQ) show a composition bias toward polar residues.

This sequence belongs to the protein kinase superfamily. CAMK Ser/Thr protein kinase family. SNF1 subfamily. Mg(2+) is required as a cofactor.

The catalysed reaction is L-seryl-[protein] + ATP = O-phospho-L-seryl-[protein] + ADP + H(+). The enzyme catalyses L-threonyl-[protein] + ATP = O-phospho-L-threonyl-[protein] + ADP + H(+). This chain is Serine/threonine-protein kinase SIK3 homolog, found in Danio rerio (Zebrafish).